A 368-amino-acid chain; its full sequence is Probable replication factor C subunit 5 (368 aa).

69-76 (GPPGTGKT) is a binding site for ATP.

Belongs to the activator 1 small subunits family. Heteropentamer of various rfc subunits that forms a complex (RFC) with PCNA in the presence of ATP.

The protein resides in the nucleus. Functionally, the elongation of primed DNA templates by DNA polymerase delta and epsilon requires the action of the accessory proteins proliferating cell nuclear antigen (PCNA) and activator 1. This Caenorhabditis elegans protein is Probable replication factor C subunit 5.